A 146-amino-acid polypeptide reads, in one-letter code: Inclusion membrane protein D (146 aa).

A run of 2 helical transmembrane segments spans residues 38 to 58 and 68 to 88; these read AAVAVATILAIALLVVAGLLF and VVAASLFFGVGAFLLGGALVG.

It localises to the secreted. It is found in the host vacuole. The protein localises to the host pathogen-containing vacuole. The protein resides in the host pathogen-containing vacuole membrane. Host inclusion membrane protein probably involved in early modification events of the chlamydial inclusion. The polypeptide is Inclusion membrane protein D (Chlamydia trachomatis serovar L2 (strain ATCC VR-902B / DSM 19102 / 434/Bu)).